Here is a 123-residue protein sequence, read N- to C-terminus: Large ribosomal subunit protein uL18 (123 aa).

This sequence belongs to the universal ribosomal protein uL18 family. In terms of assembly, part of the 50S ribosomal subunit; part of the 5S rRNA/L5/L18/L25 subcomplex. Contacts the 5S and 23S rRNAs.

Functionally, this is one of the proteins that bind and probably mediate the attachment of the 5S RNA into the large ribosomal subunit, where it forms part of the central protuberance. The chain is Large ribosomal subunit protein uL18 from Desulforudis audaxviator (strain MP104C).